A 145-amino-acid polypeptide reads, in one-letter code: UI (145 aa).

A signal peptide spans 1 to 22; that stretch reads MKPVPLVLLITSVLLTTHIPLS. At V143 the chain carries Valine amide.

The protein belongs to the sauvagine/corticotropin-releasing factor/urotensin I family.

Its subcellular location is the secreted. In terms of biological role, urotensin is found in the teleost caudal neurosecretory system. It has a suggested role in osmoregulation and as a corticotropin-releasing factor. The non-hormonal portion of this precursor may be a urotensin binding protein, urophysin. This chain is UI, found in Carassius auratus (Goldfish).